The following is a 704-amino-acid chain: Ion-translocating oxidoreductase complex subunit C (704 aa).

2 consecutive 4Fe-4S ferredoxin-type domains span residues Met368 to Tyr397 and Lys407 to Phe436. Residues Cys377, Cys380, Cys383, Cys387, Cys416, Cys419, Cys422, and Cys426 each contribute to the [4Fe-4S] cluster site. The segment at Arg536–Ala685 is disordered. Residues Lys556–Arg565 are compositionally biased toward low complexity.

This sequence belongs to the 4Fe4S bacterial-type ferredoxin family. RnfC subfamily. The complex is composed of six subunits: RsxA, RsxB, RsxC, RsxD, RsxE and RsxG. [4Fe-4S] cluster serves as cofactor.

Its subcellular location is the cell inner membrane. In terms of biological role, part of a membrane-bound complex that couples electron transfer with translocation of ions across the membrane. Required to maintain the reduced state of SoxR. In Salmonella dublin (strain CT_02021853), this protein is Ion-translocating oxidoreductase complex subunit C.